A 231-amino-acid chain; its full sequence is Aquaporin Z (231 aa).

Transmembrane regions (helical) follow at residues 9-29 (LLGT…AAAF) and 34-54 (IGFV…IYAV). The short motif at 63 to 65 (NPA) is the NPA 1 element. Transmembrane regions (helical) follow at residues 82 to 102 (IPYI…LYVI), 133 to 153 (SAIV…IGAT), and 160 to 180 (GFAP…SIPI). An NPA 2 motif is present at residues 186–188 (NPA). The helical transmembrane segment at 202-222 (LEQLWFFWVMPIIGGIVGGGI) threads the bilayer.

The protein belongs to the MIP/aquaporin (TC 1.A.8) family. Homotetramer.

It is found in the cell inner membrane. It catalyses the reaction H2O(in) = H2O(out). In terms of biological role, channel that permits osmotically driven movement of water in both directions. It is involved in the osmoregulation and in the maintenance of cell turgor during volume expansion in rapidly growing cells. It mediates rapid entry or exit of water in response to abrupt changes in osmolarity. The chain is Aquaporin Z from Photorhabdus laumondii subsp. laumondii (strain DSM 15139 / CIP 105565 / TT01) (Photorhabdus luminescens subsp. laumondii).